The sequence spans 232 residues: Ornithine carbamoyltransferase (232 aa).

Residues Gln-15, Arg-39, and 66-69 (HPTQ) contribute to the carbamoyl phosphate site. Residues Asn-99, Asp-163, and 167 to 168 (SM) contribute to the L-ornithine site. Carbamoyl phosphate-binding positions include 204–207 (HCLP) and Thr-232.

It belongs to the aspartate/ornithine carbamoyltransferase superfamily. OTCase family.

The protein resides in the cytoplasm. It catalyses the reaction carbamoyl phosphate + L-ornithine = L-citrulline + phosphate + H(+). Its pathway is amino-acid biosynthesis; L-arginine biosynthesis; L-arginine from L-ornithine and carbamoyl phosphate: step 1/3. Its function is as follows. Reversibly catalyzes the transfer of the carbamoyl group from carbamoyl phosphate (CP) to the N(epsilon) atom of ornithine (ORN) to produce L-citrulline. This is Ornithine carbamoyltransferase (argF) from Neisseria pharyngis.